Reading from the N-terminus, the 257-residue chain is Homeobox protein ceh-36 (257 aa).

Over residues 33 to 49 the composition is skewed to low complexity; that stretch reads SATTSSTTMAPMAPNSE. Disordered regions lie at residues 33–63 and 113–156; these read SATT…TSFN and DRNN…GTPE. A DNA-binding region (homeobox) is located at residues 55-117; sequence GRRERTSFNR…NRRAKDRNNK (63 aa). Positions 123–137 are enriched in low complexity; the sequence is HPGSTSSRSSNGSPH.

The protein belongs to the paired homeobox family. In terms of assembly, interacts with sox-2. As to expression, expressed in ASE and AWC chemosensory neurons. Expressed left-right asymmetrically in the embryo, in the grandmother cell and the mother cell to the MI pharyngeal motorneuron but in neither analogous precursors of the e3D neuron.

It is found in the nucleus. Functionally, probable transcription factor, acting as a progenitor identity factor regulating the development of lineally-related embryonic cells including glial, excretory and neuronal cells. Mediates chemosensory function of ASE and AWC neurons. In ASE neurons, required to diversify the fate of the ASEL neurons from the ASER neurons. Acts cell-autonomously to establish a neuronal left right asymmetry, possibly promoting asymmetric expression of the helix-loop-helix proteins ngn-1 and hlh-2. In cooperation with the transcription factor sox-2, required for the differentiation of AWC olfactory neurons. May regulate the expression of sox-2 in AWC olfactory neurons. In Caenorhabditis elegans, this protein is Homeobox protein ceh-36.